A 229-amino-acid chain; its full sequence is Large ribosomal subunit protein uL1 (229 aa).

It belongs to the universal ribosomal protein uL1 family. As to quaternary structure, part of the 50S ribosomal subunit.

Its function is as follows. Binds directly to 23S rRNA. The L1 stalk is quite mobile in the ribosome, and is involved in E site tRNA release. Protein L1 is also a translational repressor protein, it controls the translation of the L11 operon by binding to its mRNA. This Streptococcus agalactiae serotype Ia (strain ATCC 27591 / A909 / CDC SS700) protein is Large ribosomal subunit protein uL1.